The primary structure comprises 190 residues: Myophilin (190 aa).

Positions 1–23 (MSNVPPPSGLSYQVKKKLEGKRD) are disordered. One can recognise a Calponin-homology (CH) domain in the interval 24 to 130 (KDQENEALEW…RTLFALGRTC (107 aa)). One copy of the Calponin-like repeat lies at 165–189 (VSLQYGSNKGASQAGINMGKQRMIM).

Belongs to the calponin family. In terms of tissue distribution, muscle specific.

The chain is Myophilin from Echinococcus granulosus (Hydatid tapeworm).